The following is a 697-amino-acid chain: Long-chain-fatty-acid--CoA ligase 6 (697 aa).

The helical; Signal-anchor for type III membrane protein transmembrane segment at 25-45 (LSATTLVSMGALAAILAYWLT) threads the bilayer. Residues 46–697 (HRPKALQPPC…QIEELYSISM (652 aa)) lie on the Cytoplasmic side of the membrane.

The protein belongs to the ATP-dependent AMP-binding enzyme family. Requires Mg(2+) as cofactor. Expressed predominantly in brain and, to a much lesser extent, in heart and adrenal.

It is found in the mitochondrion outer membrane. The protein localises to the peroxisome membrane. Its subcellular location is the microsome membrane. The protein resides in the endoplasmic reticulum membrane. The catalysed reaction is a long-chain fatty acid + ATP + CoA = a long-chain fatty acyl-CoA + AMP + diphosphate. The enzyme catalyses (5Z,8Z,11Z,14Z)-eicosatetraenoate + ATP + CoA = (5Z,8Z,11Z,14Z)-eicosatetraenoyl-CoA + AMP + diphosphate. It carries out the reaction 15-hydroxy-(5Z,8Z,11Z,13E)-eicosatetraenoate + ATP + CoA = 15-hydroxy-(5Z,8Z,11Z,13E)-eicosatetraenoyl-CoA + AMP + diphosphate. It catalyses the reaction 12-hydroxy-(5Z,8Z,10E,14Z)-eicosatetraenoate + ATP + CoA = 12-hydroxy-(5Z,8Z,10E,14Z)-eicosatetraenoyl-CoA + AMP + diphosphate. The catalysed reaction is 5-hydroxy-(6E,8Z,11Z,14Z)-eicosatetraenoate + ATP + CoA = 5-hydroxy-(6E,8Z,11Z,14Z)-eicosatetraenoyl-CoA + AMP + diphosphate. The enzyme catalyses hexadecanoate + ATP + CoA = hexadecanoyl-CoA + AMP + diphosphate. It carries out the reaction (E)-hexadec-2-enoate + ATP + CoA = (2E)-hexadecenoyl-CoA + AMP + diphosphate. Catalyzes the conversion of long-chain fatty acids to their active form acyl-CoA for both synthesis of cellular lipids, and degradation via beta-oxidation. Plays an important role in fatty acid metabolism in brain and the acyl-CoAs produced may be utilized exclusively for the synthesis of the brain lipid. In Rattus norvegicus (Rat), this protein is Long-chain-fatty-acid--CoA ligase 6.